Here is a 1279-residue protein sequence, read N- to C-terminus: Maestro heat-like repeat-containing protein family member 7 (1279 aa).

A disordered region spans residues 1–145 (MALSRGTSLI…NSSRPCSEDV (145 aa)). Residues 39-61 (PDLALAPPPEHALALTPALHPAL) are compositionally biased toward low complexity. Polar residues-rich tracts occupy residues 71–106 (PVSN…NHTS) and 124–140 (PSST…SSRP). 5 N-linked (GlcNAc...) asparagine glycosylation sites follow: N200, N210, N255, N267, and N296. S356 carries the post-translational modification Phosphoserine. An N-linked (GlcNAc...) asparagine glycan is attached at N541. 2 consecutive transmembrane segments (helical) span residues 548–568 (TLVT…LLLG) and 722–742 (LLPI…ALLM). HEAT repeat units lie at residues 913-950 (QELC…MEQV), 992-1029 (AKVQ…GQGK), 1035-1072 (AVYV…KLQT), and 1080-1117 (EQLT…FMNW).

The protein localises to the membrane. The polypeptide is Maestro heat-like repeat-containing protein family member 7 (Mroh7) (Mus musculus (Mouse)).